A 166-amino-acid polypeptide reads, in one-letter code: Lithostathine-1-beta (166 aa).

The signal sequence occupies residues Met1–Gly22. Thr27 carries an O-linked (GalNAc...) threonine glycan. The C-type lectin domain maps to Ile34–Phe164. 3 cysteine pairs are disulfide-bonded: Cys36-Cys47, Cys64-Cys162, and Cys137-Cys154.

All O-linked glycans consist of Gal-GlcNAc-Gal-GalNAc tetrasaccharide core and get elongated (microheterogeneity).

It is found in the secreted. Might act as an inhibitor of spontaneous calcium carbonate precipitation. May be associated with neuronal sprouting in brain, and with brain and pancreas regeneration. The sequence is that of Lithostathine-1-beta (REG1B) from Homo sapiens (Human).